A 429-amino-acid polypeptide reads, in one-letter code: 3-phosphoshikimate 1-carboxyvinyltransferase (429 aa).

Positions 22, 23, and 27 each coordinate 3-phosphoshikimate. Phosphoenolpyruvate is bound at residue lysine 22. The phosphoenolpyruvate site is built by glycine 93 and arginine 122. 3-phosphoshikimate contacts are provided by serine 168, serine 169, glutamine 170, serine 196, aspartate 311, and lysine 338. Glutamine 170 serves as a coordination point for phosphoenolpyruvate. Aspartate 311 serves as the catalytic Proton acceptor. Positions 342 and 384 each coordinate phosphoenolpyruvate.

It belongs to the EPSP synthase family. Monomer.

It localises to the cytoplasm. It catalyses the reaction 3-phosphoshikimate + phosphoenolpyruvate = 5-O-(1-carboxyvinyl)-3-phosphoshikimate + phosphate. It participates in metabolic intermediate biosynthesis; chorismate biosynthesis. Functionally, catalyzes the transfer of the enolpyruvyl moiety of phosphoenolpyruvate (PEP) to the 5-hydroxyl of shikimate-3-phosphate (S3P) to produce enolpyruvyl shikimate-3-phosphate and inorganic phosphate. This is 3-phosphoshikimate 1-carboxyvinyltransferase from Methanocaldococcus jannaschii (strain ATCC 43067 / DSM 2661 / JAL-1 / JCM 10045 / NBRC 100440) (Methanococcus jannaschii).